Reading from the N-terminus, the 634-residue chain is Probable potassium transport system protein Kup (634 aa).

The next 12 helical transmembrane spans lie at 19 to 39 (AVGLMVGAVGVCYGDIGTSPL), 62 to 82 (VLSLIFWSLIWVVSIKYVIFV), 113 to 133 (FVVVAGLIGAALFYGDSMITP), 150 to 170 (GLEHWTVPLALIVLIGLFLIQ), 177 to 197 (IGILFGPVMVLWFGALAALGV), 225 to 245 (IGVAILGATVLALTGAEALYA), 259 to 279 (WFLLVLPALVLNYFGQGATIL), 291 to 311 (LLAPGWALLPMVALSTLATVI), 349 to 369 (IYIGGVNWALMVGVVLLVLGF), 379 to 399 (YGVAVTGTMLITTLLMGVVIW), 406 to 426 (LWLGVPFFCVMLAVDSLFFAA), and 431 to 451 (VVQGGAFPVIAGIVIFILMST).

Belongs to the HAK/KUP transporter (TC 2.A.72) family.

It is found in the cell inner membrane. The enzyme catalyses K(+)(in) + H(+)(in) = K(+)(out) + H(+)(out). Transport of potassium into the cell. Likely operates as a K(+):H(+) symporter. The protein is Probable potassium transport system protein Kup of Pseudomonas paraeruginosa (strain DSM 24068 / PA7) (Pseudomonas aeruginosa (strain PA7)).